The sequence spans 1117 residues: DNA polymerase (1117 aa).

The segment at 591–621 is disordered; sequence ESSPVASFEEDSEQTSDSSLGEVSSQGSSDG. Over residues 606-618 the composition is skewed to low complexity; that stretch reads SDSSLGEVSSQGS.

This sequence belongs to the DNA polymerase type-B family.

The protein resides in the host nucleus. It carries out the reaction DNA(n) + a 2'-deoxyribonucleoside 5'-triphosphate = DNA(n+1) + diphosphate. The polypeptide is DNA polymerase (Cavia porcellus (Guinea pig)).